We begin with the raw amino-acid sequence, 230 residues long: Probable methylthioribulose-1-phosphate dehydratase (230 aa).

Position 87 (cysteine 87) interacts with substrate. 2 residues coordinate Zn(2+): histidine 105 and histidine 107. The active-site Proton donor/acceptor is glutamate 129. Position 185 (histidine 185) interacts with Zn(2+).

This sequence belongs to the aldolase class II family. MtnB subfamily. Zn(2+) serves as cofactor.

The protein resides in the cytoplasm. The catalysed reaction is 5-(methylsulfanyl)-D-ribulose 1-phosphate = 5-methylsulfanyl-2,3-dioxopentyl phosphate + H2O. The protein operates within amino-acid biosynthesis; L-methionine biosynthesis via salvage pathway; L-methionine from S-methyl-5-thio-alpha-D-ribose 1-phosphate: step 2/6. In terms of biological role, catalyzes the dehydration of methylthioribulose-1-phosphate (MTRu-1-P) into 2,3-diketo-5-methylthiopentyl-1-phosphate (DK-MTP-1-P). This Drosophila grimshawi (Hawaiian fruit fly) protein is Probable methylthioribulose-1-phosphate dehydratase.